A 178-amino-acid chain; its full sequence is Translation initiation factor IF-3 (178 aa).

This sequence belongs to the IF-3 family. In terms of assembly, monomer.

It localises to the cytoplasm. Its function is as follows. IF-3 binds to the 30S ribosomal subunit and shifts the equilibrium between 70S ribosomes and their 50S and 30S subunits in favor of the free subunits, thus enhancing the availability of 30S subunits on which protein synthesis initiation begins. The sequence is that of Translation initiation factor IF-3 from Picosynechococcus sp. (strain ATCC 27264 / PCC 7002 / PR-6) (Agmenellum quadruplicatum).